The sequence spans 317 residues: Cold tolerance protein 1 (317 aa).

It belongs to the CTO1 family.

In terms of biological role, protein required for cold tolerance. Plays a role in the regulation of phosphate uptake. This is Cold tolerance protein 1 from Saccharomyces cerevisiae (strain ATCC 204508 / S288c) (Baker's yeast).